Here is a 266-residue protein sequence, read N- to C-terminus: Methionine aminopeptidase (266 aa).

H80 is a substrate binding site. A divalent metal cation contacts are provided by D98, D109, and H172. H179 contributes to the substrate binding site. A divalent metal cation contacts are provided by E206 and E237.

This sequence belongs to the peptidase M24A family. Methionine aminopeptidase type 1 subfamily. In terms of assembly, monomer. Requires Co(2+) as cofactor. The cofactor is Zn(2+). Mn(2+) serves as cofactor. It depends on Fe(2+) as a cofactor.

It carries out the reaction Release of N-terminal amino acids, preferentially methionine, from peptides and arylamides.. Removes the N-terminal methionine from nascent proteins. The N-terminal methionine is often cleaved when the second residue in the primary sequence is small and uncharged (Met-Ala-, Cys, Gly, Pro, Ser, Thr, or Val). Requires deformylation of the N(alpha)-formylated initiator methionine before it can be hydrolyzed. The chain is Methionine aminopeptidase from Buchnera aphidicola subsp. Baizongia pistaciae (strain Bp).